The primary structure comprises 672 residues: Segment polarity protein dishevelled homolog mig-5 (672 aa).

In terms of domain architecture, DIX spans 9-91 (CSQIKVFYYL…GFYEIFLVST (83 aa)). Disordered regions lie at residues 97 to 127 (LPRNSGTMTRPQRTALDKRRRRSADFDATPY), 150 to 174 (YTSNSEDPYQYDEHTRRTGDDSSLY), and 187 to 215 (DDDRRRKKQKKERFRRPYVPSTISSATES). A compositionally biased stretch (polar residues) spans 98–108 (PRNSGTMTRPQ). Over residues 160–169 (YDEHTRRTGD) the composition is skewed to basic and acidic residues. Positions 191–202 (RRKKQKKERFRR) are enriched in basic residues. The 69-residue stretch at 226–294 (EIYLPMKNVP…PQAVRSLREA (69 aa)) folds into the PDZ domain. The region spanning 427–501 (PDSGLAVKNR…TEKCYYVFGD (75 aa)) is the DEP domain. The interval 604–672 (KNNHRQVPAP…SNSRTRILRT (69 aa)) is disordered. Over residues 660–672 (ENSSNSRTRILRT) the composition is skewed to polar residues.

The protein belongs to the DSH family.

The protein resides in the cytoplasm. The protein localises to the cell cortex. It localises to the cell membrane. Its subcellular location is the cell junction. Its function is as follows. Plays a role in the signal transduction pathways mediated by multiple Wnt genes. Functions redundantly with other dishevelled family members throughout development. During embryonic and larval development, controls cell migration and/or cell fate specification of hypodermal cells, hypodermal seam cells, vulval precursor cells and, through distal tip cell migration, somatic gonad precursor cells. In early embryos, regulates the orientation of the mitotic spindle of blastomeres and specifically, along with dsh-2, is required for the correct mitotic spindle orientation of the ABar blastomere division plane. Controls the polarity and the asymmetric localization of downstream components of the wnt/beta-catenin asymmetry pathway, and in particular, controls the asymmetric localization of the wnt receptor lin-17/Frizzled in ectodermal blast B cells. May act redundantly with dsh-2 to regulate the expression and nuclear localization of the beta-catenin homolog wrm-2, but alone seems to be required for the polarity of wrm-2 during the asymmetric cell division of hypodermal seam cells. Also, maintains the polarity and migration of QL neuroblasts in larvae. During the embryonic development of touch receptor neurons, may act redundantly with dsh-1, downstream of wnt signaling ligands and the wnt receptor lin-17/Frizzled, to direct the growth of neurites of touch receptor neurons towards the anterior of the body of the worm and towards the PLM touch receptor neuron and other tail neurons. May play a role in the guidance of posterior D-type motor neuron axons along the anteroposterior axis. The polypeptide is Segment polarity protein dishevelled homolog mig-5 (Caenorhabditis elegans).